A 130-amino-acid chain; its full sequence is S-adenosylmethionine decarboxylase proenzyme (130 aa).

Ser-63 functions as the Schiff-base intermediate with substrate; via pyruvic acid in the catalytic mechanism. Ser-63 bears the Pyruvic acid (Ser); by autocatalysis mark. His-68 functions as the Proton acceptor; for processing activity in the catalytic mechanism. The active-site Proton donor; for catalytic activity is Cys-83.

Belongs to the prokaryotic AdoMetDC family. Type 1 subfamily. As to quaternary structure, heterotetramer of two alpha and two beta chains arranged as a dimer of alpha/beta heterodimers. Pyruvate serves as cofactor. Is synthesized initially as an inactive proenzyme. Formation of the active enzyme involves a self-maturation process in which the active site pyruvoyl group is generated from an internal serine residue via an autocatalytic post-translational modification. Two non-identical subunits are generated from the proenzyme in this reaction, and the pyruvate is formed at the N-terminus of the alpha chain, which is derived from the carboxyl end of the proenzyme. The post-translation cleavage follows an unusual pathway, termed non-hydrolytic serinolysis, in which the side chain hydroxyl group of the serine supplies its oxygen atom to form the C-terminus of the beta chain, while the remainder of the serine residue undergoes an oxidative deamination to produce ammonia and the pyruvoyl group blocking the N-terminus of the alpha chain.

The enzyme catalyses S-adenosyl-L-methionine + H(+) = S-adenosyl 3-(methylsulfanyl)propylamine + CO2. It functions in the pathway amine and polyamine biosynthesis; S-adenosylmethioninamine biosynthesis; S-adenosylmethioninamine from S-adenosyl-L-methionine: step 1/1. Its function is as follows. Catalyzes the decarboxylation of S-adenosylmethionine to S-adenosylmethioninamine (dcAdoMet), the propylamine donor required for the synthesis of the polyamines spermine and spermidine from the diamine putrescine. In Thermotoga maritima (strain ATCC 43589 / DSM 3109 / JCM 10099 / NBRC 100826 / MSB8), this protein is S-adenosylmethionine decarboxylase proenzyme (speH).